A 229-amino-acid chain; its full sequence is MLVCIPEVLPKSEVAEFRRLMDAADWEDGRSTAGAQSAMVKRNEQLPPDSDLARTLGRRIVSALTGNPKFVSAAVPLQIFPPLFNRYAASGGHHFGIHVDNAVRGDHLTGLRIRTDLSVTLFLAEPDEYDGGELVIEDTYGSHEVKLAAGDAVLYPSTSLHMVTPVTRGARVASFFWLQSMIRDAQARSMIYDLDNAIQALVERLGRDDPETVKLTGIYHNLIRYWAEV.

One can recognise a Fe2OG dioxygenase domain in the interval 78–180 (QIFPPLFNRY…RVASFFWLQS (103 aa)). Fe cation-binding residues include His98, Asp100, and His161. Arg171 serves as a coordination point for 2-oxoglutarate.

Fe(2+) serves as cofactor. It depends on L-ascorbate as a cofactor.

The polypeptide is PKHD-type hydroxylase Rpal_3968 (Rhodopseudomonas palustris (strain TIE-1)).